Reading from the N-terminus, the 34-residue chain is Photosystem II reaction center protein M (34 aa).

The chain crosses the membrane as a helical span at residues 5-25 (ILALIAVALFISIPTAFLVII).

This sequence belongs to the PsbM family. PSII is composed of 1 copy each of membrane proteins PsbA, PsbB, PsbC, PsbD, PsbE, PsbF, PsbH, PsbI, PsbJ, PsbK, PsbL, PsbM, PsbT, PsbX, PsbY, PsbZ, Psb30/Ycf12, at least 3 peripheral proteins of the oxygen-evolving complex and a large number of cofactors. It forms dimeric complexes.

Its subcellular location is the plastid. The protein resides in the chloroplast thylakoid membrane. Its function is as follows. One of the components of the core complex of photosystem II (PSII). PSII is a light-driven water:plastoquinone oxidoreductase that uses light energy to abstract electrons from H(2)O, generating O(2) and a proton gradient subsequently used for ATP formation. It consists of a core antenna complex that captures photons, and an electron transfer chain that converts photonic excitation into a charge separation. This subunit is found at the monomer-monomer interface. In Welwitschia mirabilis (Tree tumbo), this protein is Photosystem II reaction center protein M.